We begin with the raw amino-acid sequence, 201 residues long: LexA repressor (201 aa).

Residues 28–48 constitute a DNA-binding region (H-T-H motif); sequence RAEIAARLGFRSPNAAEEHLK. Residues Ser118 and Lys155 each act as for autocatalytic cleavage activity in the active site.

This sequence belongs to the peptidase S24 family. In terms of assembly, homodimer.

It catalyses the reaction Hydrolysis of Ala-|-Gly bond in repressor LexA.. Represses a number of genes involved in the response to DNA damage (SOS response), including recA and lexA. In the presence of single-stranded DNA, RecA interacts with LexA causing an autocatalytic cleavage which disrupts the DNA-binding part of LexA, leading to derepression of the SOS regulon and eventually DNA repair. The polypeptide is LexA repressor (Photorhabdus laumondii subsp. laumondii (strain DSM 15139 / CIP 105565 / TT01) (Photorhabdus luminescens subsp. laumondii)).